The chain runs to 447 residues: Na(+)-translocating NADH-quinone reductase subunit A (447 aa).

Belongs to the NqrA family. Composed of six subunits; NqrA, NqrB, NqrC, NqrD, NqrE and NqrF.

It catalyses the reaction a ubiquinone + n Na(+)(in) + NADH + H(+) = a ubiquinol + n Na(+)(out) + NAD(+). NQR complex catalyzes the reduction of ubiquinone-1 to ubiquinol by two successive reactions, coupled with the transport of Na(+) ions from the cytoplasm to the periplasm. NqrA to NqrE are probably involved in the second step, the conversion of ubisemiquinone to ubiquinol. This Neisseria meningitidis serogroup A / serotype 4A (strain DSM 15465 / Z2491) protein is Na(+)-translocating NADH-quinone reductase subunit A.